The primary structure comprises 356 residues: Glycoprotein 42 (356 aa).

Residues 1 to 32 (MEGPAFSKPLKDKINPWGPLIVLGILIRAGVS) form the signal peptide. The Virion surface segment spans residues 33 to 331 (VQRDSPHQVF…VLGTNSNHTT (299 aa)). N43 and N58 each carry an N-linked (GlcNAc...) asparagine; by host glycan. Residues 247–279 (RPAQIMLPRPPQPPPPGTASIVPETAPPSQQPG) are disordered. The span at 254–263 (PRPPQPPPPG) shows a compositional bias: pro residues. N296 is a glycosylation site (N-linked (GlcNAc...) asparagine; by host). The CXXC signature appears at 306–309 (CWLC). Residue N328 is glycosylated (N-linked (GlcNAc...) asparagine; by host). The chain crosses the membrane as a helical span at residues 332 to 352 (LISTIMGLLIILLLLLILLLW). Topologically, residues 353–356 (TLHS) are intravirion.

In terms of assembly, homooligomer. Forms heterooligomers with mouse EPOR, probably via their respective transmembrane domains. BB6 deletion mutant does not interact with mouse MST1R isoform sf-Stk.

The protein resides in the host endoplasmic reticulum membrane. Its subcellular location is the host cell membrane. It is found in the virion membrane. In terms of biological role, this envelope-like membrane glycoprotein is responsible for ligand-independent activation of the erythropoietin receptor EPOR leading to the abnormally rapid proliferation of erythroid precursor cells. In the first stage of Friend disease, constitutive activation of the EPOR by gp42 causes uncontrolled, polyclonal proliferation of infected erythroblasts, leading to polycythemia (massive increase in the number of mature red cells). Host susceptibility to SSFV-induced erythroblastosis usually depends on the expression of the truncated isoform of MST1R receptor tyrosine kinase (MST1R isoform sf-Stk), but the deletion mutant BB6 apparently can overcome its absence. In Mus musculus (Mouse), this protein is Glycoprotein 42 (env).